Consider the following 957-residue polypeptide: Receptor-like protein 34 (957 aa).

The first 31 residues, 1–31, serve as a signal peptide directing secretion; the sequence is MKGSWVVSTSIIRITLSFTFLFICHFSDVLA. Topologically, residues 32 to 910 are extracellular; it reads APTRHLCRPE…EEEDEDLISW (879 aa). N-linked (GlcNAc...) asparagine glycosylation is found at Asn-78, Asn-101, Asn-114, Asn-143, Asn-167, Asn-191, and Asn-215. 18 LRR repeats span residues 120–143, 144–167, 168–192, 194–216, 217–240, 241–264, 266–287, 288–312, 313–336, 338–360, 361–384, 386–409, 412–434, 435–459, 460–483, 487–510, 511–534, and 535–557; these read LHFLTTLDRSHNDFEGQITSSIEN, LSHLTSLDLSYNRFSGQILNSIGN, LSRLTSLDLSFNQFSGQIPSSIGNL, HLTFLGLSGNRFFGQIPSSIGNL, SHLTFLGLSGNRFFGQFPSSIGGL, SNLTNLHLSYNKYSGQIPSSIGNL, QLIVLYLSVNNFYGEIPSSFGN, LNQLTRLDVSFNKLGGNFPNVLLNL, TGLSVVSLSNNKFTGTLPPNITSL, NLMAFYASDNAFTGTFPSFLFII, PSLTYLGLSGNQLKGTLEFGNISS, SNLQYLNIGSNNFIGPIPSSISKL, LQELGISHLNTQCRPVDFSIFSH, LKSLDDLRLSYLTTTTIDLNDILPY, FKTLRSLDLSGNLVSATNKSSVSS, SQSIQSLYLSGCGITDFPEILRTQ, HELGFLDVSNNKIKGQVPGWLWTL, and PNLFYLNLSNNTFIGFQRPTKPE. Asn-242 and Asn-263 each carry an N-linked (GlcNAc...) asparagine glycan. 2 N-linked (GlcNAc...) asparagine glycosylation sites follow: Asn-311 and Asn-332. N-linked (GlcNAc...) asparagine glycosylation occurs at Asn-381. Asn-477 is a glycosylation site (N-linked (GlcNAc...) asparagine). N-linked (GlcNAc...) asparagine glycosylation is found at Asn-541, Asn-544, Asn-569, Asn-593, Asn-608, and Asn-618. The stretch at 558–580 is one LRR 19; degenerate repeat; that stretch reads PSMAYLLGSNNNFTGKIPSFICE. 10 LRR repeats span residues 581 to 605, 606 to 630, 632 to 652, 653 to 675, 677 to 698, 699 to 722, 765 to 789, 790 to 813, 815 to 837, and 839 to 862; these read LRSLYTLDLSDNNFSGSIPRCMENL, KSNLSELNLRQNNLSGGFPEHIFES, RSLDVGHNQLVGKLPRSLRFF, SNLEVLNVESNRINDMFPFWLSS, QKLQVLVLRSNAFHGPINQALF, PKLRIIDISHNHFNGSLPTEYFVE, LTIYTAVDFSGNKFEGEIPKSIGLL, KELHVLNLSNNAFTGHIPSSIGNL, ALESLDVSQNKLYGEIPQEIGNL, and LLSYMNFSHNQLTGLVPGGQQFLT. The N-linked (GlcNAc...) asparagine glycan is linked to Asn-712. 4 N-linked (GlcNAc...) asparagine glycosylation sites follow: Asn-796, Asn-812, Asn-836, and Asn-844. Residues 911 to 931 form a helical membrane-spanning segment; it reads IAAAIGFGPGIAFGLMFGYIL. Residues 932–957 are Cytoplasmic-facing; it reads VSYKPEWFMNPFGRNNRRRKRHTTTH.

Belongs to the RLP family.

Its subcellular location is the cell membrane. This Arabidopsis thaliana (Mouse-ear cress) protein is Receptor-like protein 34.